Reading from the N-terminus, the 494-residue chain is Inosine-5'-monophosphate dehydrogenase (494 aa).

CBS domains follow at residues 93 to 154 (IIRN…NEKI) and 158 to 217 (MTTD…CKDM). Residues aspartate 251 and 301–303 (GIG) contribute to the NAD(+) site. 2 residues coordinate K(+): glycine 303 and glycine 305. IMP is bound at residue serine 306. Cysteine 308 is a binding site for K(+). The active-site Thioimidate intermediate is the cysteine 308. IMP is bound by residues 341–343 (DGG), 364–365 (GS), and 388–392 (YRGMG). Catalysis depends on arginine 406, which acts as the Proton acceptor. Glutamate 421 contributes to the IMP binding site. K(+) is bound by residues glutamate 475, serine 476, and histidine 477.

It belongs to the IMPDH/GMPR family. Homotetramer. The cofactor is K(+).

The enzyme catalyses IMP + NAD(+) + H2O = XMP + NADH + H(+). It functions in the pathway purine metabolism; XMP biosynthesis via de novo pathway; XMP from IMP: step 1/1. Its activity is regulated as follows. Mycophenolic acid (MPA) is a non-competitive inhibitor that prevents formation of the closed enzyme conformation by binding to the same site as the amobile flap. In contrast, mizoribine monophosphate (MZP) is a competitive inhibitor that induces the closed conformation. MPA is a potent inhibitor of mammalian IMPDHs but a poor inhibitor of the bacterial enzymes. MZP is a more potent inhibitor of bacterial IMPDH. Its function is as follows. Catalyzes the conversion of inosine 5'-phosphate (IMP) to xanthosine 5'-phosphate (XMP), the first committed and rate-limiting step in the de novo synthesis of guanine nucleotides, and therefore plays an important role in the regulation of cell growth. The chain is Inosine-5'-monophosphate dehydrogenase from Chlorobaculum parvum (strain DSM 263 / NCIMB 8327) (Chlorobium vibrioforme subsp. thiosulfatophilum).